The chain runs to 75 residues: Large ribosomal subunit protein bL31 (75 aa).

This sequence belongs to the bacterial ribosomal protein bL31 family. Type A subfamily. Part of the 50S ribosomal subunit.

In terms of biological role, binds the 23S rRNA. In Bradyrhizobium sp. (strain BTAi1 / ATCC BAA-1182), this protein is Large ribosomal subunit protein bL31.